Here is a 436-residue protein sequence, read N- to C-terminus: 3-ketoacyl-CoA thiolase (436 aa).

C99 (acyl-thioester intermediate) is an active-site residue. Residues H392 and C422 each act as proton acceptor in the active site.

Belongs to the thiolase-like superfamily. Thiolase family. Heterotetramer of two alpha chains (FadJ) and two beta chains (FadI).

It localises to the cytoplasm. The catalysed reaction is an acyl-CoA + acetyl-CoA = a 3-oxoacyl-CoA + CoA. It participates in lipid metabolism; fatty acid beta-oxidation. Catalyzes the final step of fatty acid oxidation in which acetyl-CoA is released and the CoA ester of a fatty acid two carbons shorter is formed. This Yersinia pestis bv. Antiqua (strain Angola) protein is 3-ketoacyl-CoA thiolase.